Consider the following 358-residue polypeptide: Peptide chain release factor 1 (358 aa).

Glutamine 233 bears the N5-methylglutamine mark. The tract at residues alanine 286 to asparagine 309 is disordered.

Belongs to the prokaryotic/mitochondrial release factor family. Methylated by PrmC. Methylation increases the termination efficiency of RF1.

The protein localises to the cytoplasm. Peptide chain release factor 1 directs the termination of translation in response to the peptide chain termination codons UAG and UAA. The polypeptide is Peptide chain release factor 1 (Carboxydothermus hydrogenoformans (strain ATCC BAA-161 / DSM 6008 / Z-2901)).